The chain runs to 76 residues: Conotoxin VnMSGL-0112 (76 aa).

The N-terminal stretch at 1 to 20 (MSGLGIMVLTLLLLVSMATS) is a signal peptide. Residues 21-45 (HQDGRGKQATQRDAINVRRRRSITR) constitute a propeptide that is removed on maturation. 3 cysteine pairs are disulfide-bonded: C49/C61, C53/C70, and C60/C74.

The protein belongs to the conotoxin O3 superfamily. In terms of tissue distribution, expressed by the venom duct.

It is found in the secreted. This chain is Conotoxin VnMSGL-0112, found in Conus ventricosus (Mediterranean cone).